Consider the following 348-residue polypeptide: Small ribosomal subunit biogenesis GTPase RsgA (348 aa).

The CP-type G domain occupies 72 to 230 (RNQLSRPAIA…IADTPGFNQP (159 aa)). Residues 121–124 (TKAD) and 172–180 (GPSGVGKSS) each bind GTP. The Zn(2+) site is built by Cys255, Cys260, His262, and Cys268. Residues 305–322 (AKSDRQGQQRLEPLLDAK) show a composition bias toward basic and acidic residues. The disordered stretch occupies residues 305 to 348 (AKSDRQGQQRLEPLLDAKKYRRRSRRQQHQHVNPMAEEVLDSEW). Residues 323 to 333 (KYRRRSRRQQH) show a composition bias toward basic residues.

Belongs to the TRAFAC class YlqF/YawG GTPase family. RsgA subfamily. Monomer. Associates with 30S ribosomal subunit, binds 16S rRNA. It depends on Zn(2+) as a cofactor.

The protein localises to the cytoplasm. Functionally, one of several proteins that assist in the late maturation steps of the functional core of the 30S ribosomal subunit. Helps release RbfA from mature subunits. May play a role in the assembly of ribosomal proteins into the subunit. Circularly permuted GTPase that catalyzes slow GTP hydrolysis, GTPase activity is stimulated by the 30S ribosomal subunit. In Thermosynechococcus vestitus (strain NIES-2133 / IAM M-273 / BP-1), this protein is Small ribosomal subunit biogenesis GTPase RsgA.